We begin with the raw amino-acid sequence, 258 residues long: Ribosomal RNA small subunit methyltransferase A (258 aa).

Residues His13, Leu15, Gly40, Glu61, Asp86, and Asn106 each coordinate S-adenosyl-L-methionine.

This sequence belongs to the class I-like SAM-binding methyltransferase superfamily. rRNA adenine N(6)-methyltransferase family. RsmA subfamily.

The protein localises to the cytoplasm. The catalysed reaction is adenosine(1518)/adenosine(1519) in 16S rRNA + 4 S-adenosyl-L-methionine = N(6)-dimethyladenosine(1518)/N(6)-dimethyladenosine(1519) in 16S rRNA + 4 S-adenosyl-L-homocysteine + 4 H(+). Specifically dimethylates two adjacent adenosines (A1518 and A1519) in the loop of a conserved hairpin near the 3'-end of 16S rRNA in the 30S particle. May play a critical role in biogenesis of 30S subunits. The chain is Ribosomal RNA small subunit methyltransferase A from Coxiella burnetii (strain RSA 331 / Henzerling II).